Consider the following 153-residue polypeptide: Small ribosomal subunit protein uS9 (153 aa).

Residues 1–19 are compositionally biased toward low complexity; it reads MTAPADEAPAVEDAPVAED. 2 disordered regions span residues 1 to 23 and 121 to 153; these read MTAP…IAPV and LKKA…YSKR. The segment covering 129-138 has biased composition (basic and acidic residues); the sequence is RDSREKERKK. Basic residues predominate over residues 139–153; that stretch reads YGLKKARKAPQYSKR.

It belongs to the universal ribosomal protein uS9 family.

In Saccharopolyspora erythraea (strain ATCC 11635 / DSM 40517 / JCM 4748 / NBRC 13426 / NCIMB 8594 / NRRL 2338), this protein is Small ribosomal subunit protein uS9.